The chain runs to 439 residues: Oxysterol-binding protein 6 (439 aa).

Disordered stretches follow at residues Met-1–Asp-40 and Glu-409–Asn-439. 2 stretches are compositionally biased toward polar residues: residues Glu-409–Asp-419 and Pro-429–Asn-439.

It belongs to the OSBP family.

This is Oxysterol-binding protein 6 (osbF) from Dictyostelium discoideum (Social amoeba).